A 278-amino-acid chain; its full sequence is Orotidine 5'-phosphate decarboxylase (278 aa).

Residues Asp-40, 62–64, 93–102, Tyr-229, and Arg-247 each bind substrate; these read KTH and DRKFIDIGNT. Lys-95 functions as the Proton donor in the catalytic mechanism.

Belongs to the OMP decarboxylase family.

It catalyses the reaction orotidine 5'-phosphate + H(+) = UMP + CO2. Its pathway is pyrimidine metabolism; UMP biosynthesis via de novo pathway; UMP from orotate: step 2/2. In Aspergillus fumigatus (strain ATCC MYA-4609 / CBS 101355 / FGSC A1100 / Af293) (Neosartorya fumigata), this protein is Orotidine 5'-phosphate decarboxylase (pyrG).